The primary structure comprises 324 residues: Melanoma-associated antigen B16 (324 aa).

Basic and acidic residues predominate over residues 1–15 (MSQDQESPRCTHDQH). Disordered regions lie at residues 1-22 (MSQDQESPRCTHDQHLQTFSET) and 39-108 (LSSS…PRNV). Residues 70-81 (SSSIAVTTTSSS) are compositionally biased toward low complexity. A compositionally biased stretch (acidic residues) spans 82–95 (ESDEASSNQEEEDS). Positions 113–312 (LDQKVAFLVN…HSFPSQYAEA (200 aa)) constitute an MAGE domain.

The chain is Melanoma-associated antigen B16 (MAGEB16) from Homo sapiens (Human).